The primary structure comprises 214 residues: Phosphoenolpyruvate guanylyltransferase 2 (214 aa).

Thr135, Gly150, and Ser153 together coordinate phosphoenolpyruvate.

It belongs to the CofC family.

It catalyses the reaction phosphoenolpyruvate + GTP + H(+) = enolpyruvoyl-2-diphospho-5'-guanosine + diphosphate. Its pathway is cofactor biosynthesis; coenzyme F420 biosynthesis. Guanylyltransferase that catalyzes the activation of phosphoenolpyruvate (PEP) as enolpyruvoyl-2-diphospho-5'-guanosine, via the condensation of PEP with GTP. It is involved in the biosynthesis of coenzyme F420, a hydride carrier cofactor. This Rhodococcus jostii (strain RHA1) protein is Phosphoenolpyruvate guanylyltransferase 2.